We begin with the raw amino-acid sequence, 207 residues long: Large ribosomal subunit protein uL4 (207 aa).

Over residues 45–57 (RQGTHSVKNRSTV) the composition is skewed to polar residues. The segment at 45–77 (RQGTHSVKNRSTVSGGGRKPWRQKGTGNARQGS) is disordered.

Belongs to the universal ribosomal protein uL4 family. As to quaternary structure, part of the 50S ribosomal subunit.

Functionally, one of the primary rRNA binding proteins, this protein initially binds near the 5'-end of the 23S rRNA. It is important during the early stages of 50S assembly. It makes multiple contacts with different domains of the 23S rRNA in the assembled 50S subunit and ribosome. In terms of biological role, forms part of the polypeptide exit tunnel. The chain is Large ribosomal subunit protein uL4 from Oenococcus oeni (strain ATCC BAA-331 / PSU-1).